The following is a 510-amino-acid chain: Histidine ammonia-lyase (510 aa).

The segment at residues 143–145 is a cross-link (5-imidazolinone (Ala-Gly)); that stretch reads ASG. Serine 144 is subject to 2,3-didehydroalanine (Ser).

Belongs to the PAL/histidase family. In terms of processing, contains an active site 4-methylidene-imidazol-5-one (MIO), which is formed autocatalytically by cyclization and dehydration of residues Ala-Ser-Gly.

It is found in the cytoplasm. The enzyme catalyses L-histidine = trans-urocanate + NH4(+). It participates in amino-acid degradation; L-histidine degradation into L-glutamate; N-formimidoyl-L-glutamate from L-histidine: step 1/3. The sequence is that of Histidine ammonia-lyase from Shewanella woodyi (strain ATCC 51908 / MS32).